Here is a 78-residue protein sequence, read N- to C-terminus: Small ribosomal subunit protein bS18 (78 aa).

Belongs to the bacterial ribosomal protein bS18 family. In terms of assembly, part of the 30S ribosomal subunit. Forms a tight heterodimer with protein bS6.

In terms of biological role, binds as a heterodimer with protein bS6 to the central domain of the 16S rRNA, where it helps stabilize the platform of the 30S subunit. The sequence is that of Small ribosomal subunit protein bS18 from Beutenbergia cavernae (strain ATCC BAA-8 / DSM 12333 / CCUG 43141 / JCM 11478 / NBRC 16432 / NCIMB 13614 / HKI 0122).